The primary structure comprises 464 residues: tRNA-2-methylthio-N(6)-dimethylallyladenosine synthase (464 aa).

The 117-residue stretch at 19–135 (GSYWITTFGC…LENLLGKVDL (117 aa)) folds into the MTTase N-terminal domain. Residues Cys28, Cys64, Cys98, Cys170, Cys174, and Cys177 each contribute to the [4Fe-4S] cluster site. The 238-residue stretch at 156 to 393 (RESSICGWVN…NELVETTSKQ (238 aa)) folds into the Radical SAM core domain. The TRAM domain occupies 396-464 (ERYLDSIESV…PFSLTGILCL (69 aa)).

Belongs to the methylthiotransferase family. MiaB subfamily. Monomer. [4Fe-4S] cluster is required as a cofactor.

The protein localises to the cytoplasm. The catalysed reaction is N(6)-dimethylallyladenosine(37) in tRNA + (sulfur carrier)-SH + AH2 + 2 S-adenosyl-L-methionine = 2-methylsulfanyl-N(6)-dimethylallyladenosine(37) in tRNA + (sulfur carrier)-H + 5'-deoxyadenosine + L-methionine + A + S-adenosyl-L-homocysteine + 2 H(+). Its function is as follows. Catalyzes the methylthiolation of N6-(dimethylallyl)adenosine (i(6)A), leading to the formation of 2-methylthio-N6-(dimethylallyl)adenosine (ms(2)i(6)A) at position 37 in tRNAs that read codons beginning with uridine. The sequence is that of tRNA-2-methylthio-N(6)-dimethylallyladenosine synthase from Prochlorococcus marinus (strain MIT 9215).